A 299-amino-acid polypeptide reads, in one-letter code: Glycerol-3-phosphate dehydrogenase [NAD(P)+] (299 aa).

The NADPH site is built by Trp11, Arg30, His31, and Lys79. Residues Lys79, Gly107, and Ser109 each contribute to the sn-glycerol 3-phosphate site. An NADPH-binding site is contributed by Ala111. Sn-glycerol 3-phosphate is bound by residues Lys161, Asp214, Ser224, Arg225, and Asn226. Lys161 functions as the Proton acceptor in the catalytic mechanism. Arg225 provides a ligand contact to NADPH. Residues Val249 and Glu251 each coordinate NADPH.

This sequence belongs to the NAD-dependent glycerol-3-phosphate dehydrogenase family.

The protein resides in the cytoplasm. The enzyme catalyses sn-glycerol 3-phosphate + NAD(+) = dihydroxyacetone phosphate + NADH + H(+). It carries out the reaction sn-glycerol 3-phosphate + NADP(+) = dihydroxyacetone phosphate + NADPH + H(+). It participates in membrane lipid metabolism; glycerophospholipid metabolism. In terms of biological role, catalyzes the reduction of the glycolytic intermediate dihydroxyacetone phosphate (DHAP) to sn-glycerol 3-phosphate (G3P), the key precursor for phospholipid synthesis. This is Glycerol-3-phosphate dehydrogenase [NAD(P)+] from Nitratiruptor sp. (strain SB155-2).